The sequence spans 407 residues: Phosphonoacetate hydrolase (407 aa).

The Zn(2+) site is built by aspartate 25, threonine 64, aspartate 202, histidine 206, aspartate 241, histidine 242, and histidine 368. Substrate-binding residues include threonine 64 and aspartate 202. Substrate is bound by residues histidine 242 and histidine 368.

Belongs to the alkaline phosphatase family. PhnA subfamily. Homodimer. Requires Zn(2+) as cofactor.

The catalysed reaction is phosphonoacetate + H2O = acetate + phosphate + H(+). With respect to regulation, completely inhibited by EDTA and 1,10-phenanthroline. Moderately inhibited by the phosphonocarboxylic acids phosphonoformate and 3-phosphonopropionate and the phosphonate herbicide glyphosate. Partially inhibited by the reducing agents sodium sulfide and dithiotheitol and the chelating agent iminodiacetate. Nonphosphonate analogs of phosphonoacetate, such as arsonoacetate, sulfonoacetate and malonate are poor inhibitors. Inorganic phosphate, acetate and the known phosphonotase inhibitor phosphite have little effect on activity. Not inhibited by the alkylphosphonic acids methylphosphonate and ethylphosphonate, or the aminoalkylphosphonates 2-aminoethylphosphonate, 3-aminopropylphosphonate and 4-aminobutylphosphonate. Fe(3+), Ca(2+), Mg(2+) and Cs(+) have no effect on activity. Activity is slightly increased by the aminoalkylphosphonates 1-aminoethylphosphonate, 1-aminobutylphosphonate, 2-amino-4-butylphosphonate. Activity is increased by Zn(2+), Mn(2+) and Co(2+), these 3 metal ions also allow recovery of activity after EDTA treatment. Its function is as follows. Specifically hydrolyzes phosphonoacetate. Does not have activity on other organophosphonates or acetates. The polypeptide is Phosphonoacetate hydrolase (Pseudomonas fluorescens).